The chain runs to 710 residues: Polyribonucleotide nucleotidyltransferase (710 aa).

The Mg(2+) site is built by aspartate 489 and aspartate 495. In terms of domain architecture, KH spans 556-615; that stretch reads PKIDTIKIDVDKIKVVIGKGGETIDKIIAETGVKIDIDDEGNVSIYSSDQAAIDRTKEII. In terms of domain architecture, S1 motif spans 625 to 693; it reads GEVYHAKVVR…EKGRVDASMK (69 aa). Residues 691-710 form a disordered region; it reads SMKALIPRPPKPEKKEEKHD. Over residues 700–710 the composition is skewed to basic and acidic residues; that stretch reads PKPEKKEEKHD.

Belongs to the polyribonucleotide nucleotidyltransferase family. Mg(2+) serves as cofactor.

The protein localises to the cytoplasm. The catalysed reaction is RNA(n+1) + phosphate = RNA(n) + a ribonucleoside 5'-diphosphate. Functionally, involved in mRNA degradation. Catalyzes the phosphorolysis of single-stranded polyribonucleotides processively in the 3'- to 5'-direction. This chain is Polyribonucleotide nucleotidyltransferase, found in Streptococcus pyogenes serotype M1.